The chain runs to 156 residues: Small ribosomal subunit protein uS7 (156 aa).

Belongs to the universal ribosomal protein uS7 family. In terms of assembly, part of the 30S ribosomal subunit. Contacts proteins S9 and S11.

Its function is as follows. One of the primary rRNA binding proteins, it binds directly to 16S rRNA where it nucleates assembly of the head domain of the 30S subunit. Is located at the subunit interface close to the decoding center, probably blocks exit of the E-site tRNA. In Brachyspira hyodysenteriae (strain ATCC 49526 / WA1), this protein is Small ribosomal subunit protein uS7.